A 103-amino-acid chain; its full sequence is UPF0145 protein RSKD131_1772 (103 aa).

This sequence belongs to the UPF0145 family.

The protein is UPF0145 protein RSKD131_1772 of Cereibacter sphaeroides (strain KD131 / KCTC 12085) (Rhodobacter sphaeroides).